Here is a 336-residue protein sequence, read N- to C-terminus: Holliday junction branch migration complex subunit RuvB (336 aa).

The large ATPase domain (RuvB-L) stretch occupies residues 4-184 (ADRLISAGTT…FGIVQRLEFY (181 aa)). Residues isoleucine 23, arginine 24, glycine 65, lysine 68, threonine 69, threonine 70, 131–133 (EDY), arginine 174, tyrosine 184, and arginine 221 each bind ATP. Threonine 69 serves as a coordination point for Mg(2+). A small ATPAse domain (RuvB-S) region spans residues 185–255 (QVPDLQYIVS…IAAQALDMLN (71 aa)). The head domain (RuvB-H) stretch occupies residues 258-336 (AEGFDYMDRK…HFGITPPEMP (79 aa)). DNA-binding residues include arginine 294, arginine 313, and arginine 318.

It belongs to the RuvB family. Homohexamer. Forms an RuvA(8)-RuvB(12)-Holliday junction (HJ) complex. HJ DNA is sandwiched between 2 RuvA tetramers; dsDNA enters through RuvA and exits via RuvB. An RuvB hexamer assembles on each DNA strand where it exits the tetramer. Each RuvB hexamer is contacted by two RuvA subunits (via domain III) on 2 adjacent RuvB subunits; this complex drives branch migration. In the full resolvosome a probable DNA-RuvA(4)-RuvB(12)-RuvC(2) complex forms which resolves the HJ.

The protein resides in the cytoplasm. It carries out the reaction ATP + H2O = ADP + phosphate + H(+). Its function is as follows. The RuvA-RuvB-RuvC complex processes Holliday junction (HJ) DNA during genetic recombination and DNA repair, while the RuvA-RuvB complex plays an important role in the rescue of blocked DNA replication forks via replication fork reversal (RFR). RuvA specifically binds to HJ cruciform DNA, conferring on it an open structure. The RuvB hexamer acts as an ATP-dependent pump, pulling dsDNA into and through the RuvAB complex. RuvB forms 2 homohexamers on either side of HJ DNA bound by 1 or 2 RuvA tetramers; 4 subunits per hexamer contact DNA at a time. Coordinated motions by a converter formed by DNA-disengaged RuvB subunits stimulates ATP hydrolysis and nucleotide exchange. Immobilization of the converter enables RuvB to convert the ATP-contained energy into a lever motion, pulling 2 nucleotides of DNA out of the RuvA tetramer per ATP hydrolyzed, thus driving DNA branch migration. The RuvB motors rotate together with the DNA substrate, which together with the progressing nucleotide cycle form the mechanistic basis for DNA recombination by continuous HJ branch migration. Branch migration allows RuvC to scan DNA until it finds its consensus sequence, where it cleaves and resolves cruciform DNA. The chain is Holliday junction branch migration complex subunit RuvB from Escherichia coli (strain ATCC 8739 / DSM 1576 / NBRC 3972 / NCIMB 8545 / WDCM 00012 / Crooks).